A 199-amino-acid chain; its full sequence is MARTPNTDRRQRGGDDQRNRSPRSDERDEEFLDKLVHINRVAKVVKGGRRFAFAALVVVGDGKGRVGFGTGKAREVPEAIRKATDQAKRTMIKVPLREGRTLHHDTNGHFGAGWVTLRSAPAGTGIISGGPMRAVFETMGVQDVVGKCTGTTNPYNMIKATFDALVNSQAPRQVAARRGKKVGDIVARRDGAAAAGATE.

Residues 1-28 (MARTPNTDRRQRGGDDQRNRSPRSDERD) form a disordered region. Residues 31 to 94 (FLDKLVHINR…DQAKRTMIKV (64 aa)) enclose the S5 DRBM domain.

Belongs to the universal ribosomal protein uS5 family. In terms of assembly, part of the 30S ribosomal subunit. Contacts proteins S4 and S8.

Its function is as follows. With S4 and S12 plays an important role in translational accuracy. Functionally, located at the back of the 30S subunit body where it stabilizes the conformation of the head with respect to the body. This chain is Small ribosomal subunit protein uS5, found in Rhodospirillum rubrum (strain ATCC 11170 / ATH 1.1.1 / DSM 467 / LMG 4362 / NCIMB 8255 / S1).